We begin with the raw amino-acid sequence, 865 residues long: Protein translocase subunit SecA (865 aa).

Residues glutamine 93, 111 to 115 (GEGKT), and aspartate 501 each bind ATP. Zn(2+)-binding residues include cysteine 841, cysteine 843, cysteine 852, and cysteine 853.

Belongs to the SecA family. In terms of assembly, monomer and homodimer. Part of the essential Sec protein translocation apparatus which comprises SecA, SecYEG and auxiliary proteins SecDF-YajC and YidC. Zn(2+) is required as a cofactor.

The protein localises to the cell inner membrane. Its subcellular location is the cytoplasm. It carries out the reaction ATP + H2O + cellular proteinSide 1 = ADP + phosphate + cellular proteinSide 2.. Part of the Sec protein translocase complex. Interacts with the SecYEG preprotein conducting channel. Has a central role in coupling the hydrolysis of ATP to the transfer of proteins into and across the cell membrane, serving as an ATP-driven molecular motor driving the stepwise translocation of polypeptide chains across the membrane. The chain is Protein translocase subunit SecA from Helicobacter pylori (strain G27).